A 402-amino-acid chain; its full sequence is WAT1-related protein At5g07050 (402 aa).

The next 10 membrane-spanning stretches (helical) occupy residues 20–40 (FAMI…KISL), 48–68 (VLVV…AFFF), 74–94 (PKIT…GPVI), 109–129 (TFSC…AVLF), 149–169 (VVTV…VELF), 196–216 (FLKG…LFVL), 229–249 (LSLT…VTFV), 266–286 (LAAA…QGIV), 293–313 (VFAT…GSFV), and 318–338 (IFLG…AVLW). EamA domains are found at residues 29–159 (YAGM…MLMT) and 208–337 (LAWA…YAVL).

It belongs to the drug/metabolite transporter (DMT) superfamily. Plant drug/metabolite exporter (P-DME) (TC 2.A.7.4) family.

The protein resides in the membrane. The polypeptide is WAT1-related protein At5g07050 (Arabidopsis thaliana (Mouse-ear cress)).